Consider the following 30-residue polypeptide: Brevinin-2PTa (30 aa).

An intrachain disulfide couples Cys24 to Cys30.

In terms of tissue distribution, expressed by the skin glands.

The protein resides in the secreted. Its function is as follows. Has antibacterial activity against the Gram-positive bacterium S.aureus ATCC 25923 (MIC=18 uM) and the Gram-negative bacterium E.coli ATCC 25726 (MIC=18 uM). The sequence is that of Brevinin-2PTa from Pulchrana picturata (Malaysian fire frog).